The sequence spans 297 residues: Aspartate carbamoyltransferase catalytic subunit (297 aa).

Residues Arg48 and Thr49 each contribute to the carbamoyl phosphate site. Lys76 lines the L-aspartate pocket. Carbamoyl phosphate contacts are provided by Arg98, His129, and Gln132. L-aspartate contacts are provided by Arg162 and Arg214. 2 residues coordinate carbamoyl phosphate: Ala257 and Pro258.

Belongs to the aspartate/ornithine carbamoyltransferase superfamily. ATCase family. As to quaternary structure, heterododecamer (2C3:3R2) of six catalytic PyrB chains organized as two trimers (C3), and six regulatory PyrI chains organized as three dimers (R2).

It carries out the reaction carbamoyl phosphate + L-aspartate = N-carbamoyl-L-aspartate + phosphate + H(+). Its pathway is pyrimidine metabolism; UMP biosynthesis via de novo pathway; (S)-dihydroorotate from bicarbonate: step 2/3. In terms of biological role, catalyzes the condensation of carbamoyl phosphate and aspartate to form carbamoyl aspartate and inorganic phosphate, the committed step in the de novo pyrimidine nucleotide biosynthesis pathway. The sequence is that of Aspartate carbamoyltransferase catalytic subunit from Leuconostoc mesenteroides subsp. mesenteroides (strain ATCC 8293 / DSM 20343 / BCRC 11652 / CCM 1803 / JCM 6124 / NCDO 523 / NBRC 100496 / NCIMB 8023 / NCTC 12954 / NRRL B-1118 / 37Y).